The sequence spans 1140 residues: DNA damage-binding protein 1 (1140 aa).

The interval 13-356 is WD repeat beta-propeller A; that stretch reads TAVNGCVTGH…VVAMETFTNL (344 aa). The tract at residues 391–708 is WD repeat beta-propeller B; Interaction with CUL4A; it reads RNGIGIHEHA…LTIGTIDEIQ (318 aa). The interval 709 to 1043 is WD repeat beta-propeller C; sequence KLHIRTVPLY…NGMIGLVTSL (335 aa).

This sequence belongs to the DDB1 family. Component of the UV-DDB complex which includes DDB1 and DDB2. Component of numerous DCX (DDB1-CUL4-X-box) E3 ubiquitin-protein ligase complexes which consist of a core of DDB1, CUL4A or CUL4B and RBX1, and a substrate receptor, such as CRBN. DDB1 may recruit specific substrate targeting subunits to the DCX complex. These substrate targeting subunits are generally known as DCAF (DDB1- and CUL4-associated factor) or CDW (CUL4-DDB1-associated WD40-repeat) proteins.

It is found in the cytoplasm. The protein resides in the nucleus. It functions in the pathway protein modification; protein ubiquitination. Its function is as follows. Protein, which is both involved in DNA repair and protein ubiquitination, as part of the UV-DDB complex and DCX (DDB1-CUL4-X-box) complexes, respectively. Core component of the UV-DDB complex (UV-damaged DNA-binding protein complex), a complex that recognizes UV-induced DNA damage and recruit proteins of the nucleotide excision repair pathway (the NER pathway) to initiate DNA repair. The UV-DDB complex may recognize UV-induced DNA damage and recruit proteins of the nucleotide excision repair pathway (the NER pathway) to initiate DNA repair. Also functions as a component of numerous distinct DCX (DDB1-CUL4-X-box) E3 ubiquitin-protein ligase complexes which mediate the ubiquitination and subsequent proteasomal degradation of target proteins. The functional specificity of the DCX E3 ubiquitin-protein ligase complex is determined by the variable substrate recognition component recruited by DDB1. May play a role in the regulation of the circadian clock. This is DNA damage-binding protein 1 (DDB1) from Gallus gallus (Chicken).